A 236-amino-acid chain; its full sequence is Uridylate kinase (236 aa).

Residue 10-13 coordinates ATP; that stretch reads KLSG. G52 provides a ligand contact to UMP. ATP contacts are provided by G53 and R57. Residues D72 and 133 to 140 each bind UMP; that span reads TGNPFFTT. Residues T160, Y166, and D169 each coordinate ATP.

The protein belongs to the UMP kinase family. As to quaternary structure, homohexamer.

It is found in the cytoplasm. It catalyses the reaction UMP + ATP = UDP + ADP. It participates in pyrimidine metabolism; CTP biosynthesis via de novo pathway; UDP from UMP (UMPK route): step 1/1. Its activity is regulated as follows. Inhibited by UTP. Catalyzes the reversible phosphorylation of UMP to UDP. This chain is Uridylate kinase, found in Cupriavidus necator (strain ATCC 17699 / DSM 428 / KCTC 22496 / NCIMB 10442 / H16 / Stanier 337) (Ralstonia eutropha).